The following is a 427-amino-acid chain: POU domain protein CF1A (427 aa).

Disordered stretches follow at residues 39-77, 196-217, 288-309, and 390-427; these read YMQH…GLGS, HHHM…TPTS, TTGS…KKRT, and HDMH…LAAH. Low complexity predominate over residues 49–66; the sequence is AAAAAAHHQLPSSPSPNG. A compositionally biased stretch (gly residues) spans 67–77; it reads QGNGGGLGLGS. Residues 212 to 286 form the POU-specific domain; sequence EDTPTSDDLE…LLQKWLEEAD (75 aa). The segment at residues 304–363 is a DNA-binding region (homeobox); that stretch reads KRKKRTSIEVSVKGALEQHFHKQPKPSAQEITSLADSLQLEKEVVRVWFCNRRQKEKRMT.

The protein belongs to the POU transcription factor family. Class-3 subfamily. As to expression, coexpressed with acj6 in overlapping subsets of neurons in the embryonic epidermis and central nervous system. First detected in the precursor of the tracheal pits and the stomodeal invagination and later in the peripheral nervous system.

The protein resides in the nucleus. Binds to a DNA sequence element required for the expression of the dopa decarboxylase gene (Ddc) in specific dopaminergic neurons. Could also play an early role in specific ectodermal cells, and a subsequent role in the embryonic nervous system. In Drosophila melanogaster (Fruit fly), this protein is POU domain protein CF1A (vvl).